Reading from the N-terminus, the 154-residue chain is Cathelicidin-2 (154 aa).

The signal sequence occupies residues 1-17 (MLSCWVLLLALLGGVCA). The propeptide occupies 18 to 122 (LPAPLSYPQA…RCRDASSDPV (105 aa)). 2 cysteine pairs are disulfide-bonded: Cys75/Cys86 and Cys97/Cys114.

This sequence belongs to the cathelicidin family. Detected in trachea, lung, proventriculus, duodenum, jejunum, ileum, caeca, colon, caecal tonsil, bursa of Fabricius, kidney, ovary, testis, thymus, liver, spleen, bone marrow, skin, uropygial gland, muscle and brain.

It is found in the secreted. Binds bacterial lipopolysaccharide (LPS). Has potent antimicrobial activity against Gram-positive and Gram-negative bacteria (in vitro). Has hemolytic activity (in vitro). May play a role in the innate immune response. The sequence is that of Cathelicidin-2 (CATHL2) from Gallus gallus (Chicken).